The primary structure comprises 142 residues: Histone H2B (142 aa).

Over residues 1–10 (MPPKPAEKKP) the composition is skewed to basic and acidic residues. The segment at 1-50 (MPPKPAEKKPSSTAGKAPASSAGKAPAEAAKKTSKAPAKSGEKKKATKVR) is disordered. N6-acetyllysine; alternate occurs at positions 8 and 9. Residues lysine 8 and lysine 9 each participate in a glycyl lysine isopeptide (Lys-Gly) (interchain with G-Cter in SUMO); alternate cross-link. Positions 11–28 (SSTAGKAPASSAGKAPAE) are enriched in low complexity. At lysine 24 the chain carries N6-acetyllysine. Residues 40-50 (SGEKKKATKVR) are compositionally biased toward basic and acidic residues. A Glycyl lysine isopeptide (Lys-Gly) (interchain with G-Cter in ubiquitin) cross-link involves residue lysine 137.

It belongs to the histone H2B family. In terms of assembly, the nucleosome is a histone octamer containing two molecules each of H2A, H2B, H3 and H4 assembled in one H3-H4 heterotetramer and two H2A-H2B heterodimers. The octamer wraps approximately 147 bp of DNA. In terms of processing, monoubiquitinated by the UBC2-BRE1 complex to form H2BK123ub1. H2BK123ub1 gives a specific tag for epigenetic transcriptional activation and is also prerequisite for H3K4me and H3K79me formation. H2BK123ub1 also modulates the formation of double-strand breaks during meiosis and is a prerequisite for DNA-damage checkpoint activation. Post-translationally, acetylation of N-terminal lysines and particularly formation of H2BK11ac has a positive effect on transcription. Sumoylation to form H2BK6su or H2BK7su occurs preferentially near the telomeres and represses gene transcription.

Its subcellular location is the nucleus. It localises to the chromosome. Core component of nucleosome. Nucleosomes wrap and compact DNA into chromatin, limiting DNA accessibility to the cellular machineries which require DNA as a template. Histones thereby play a central role in transcription regulation, DNA repair, DNA replication and chromosomal stability. DNA accessibility is regulated via a complex set of post-translational modifications of histones, also called histone code, and nucleosome remodeling. The polypeptide is Histone H2B (HTB1) (Mycosarcoma maydis (Corn smut fungus)).